Consider the following 141-residue polypeptide: Hemoglobin subunit alpha-D (141 aa).

The 141-residue stretch at 1–141 (MLTAEDKKLI…VAAVLAEKYR (141 aa)) folds into the Globin domain. Residues His58 and His87 each contribute to the heme b site.

It belongs to the globin family. As to quaternary structure, heterotetramer of two alpha-D chains and two beta chains. Red blood cells.

Its function is as follows. Involved in oxygen transport from the lung to the various peripheral tissues. This is Hemoglobin subunit alpha-D (HBAD) from Cairina moschata (Muscovy duck).